A 161-amino-acid chain; its full sequence is UPF0178 protein BOV_1904 (161 aa).

The protein belongs to the UPF0178 family.

This chain is UPF0178 protein BOV_1904, found in Brucella ovis (strain ATCC 25840 / 63/290 / NCTC 10512).